The following is a 323-amino-acid chain: Replication factor C subunit 4 (323 aa).

Residues Val12, Val24, 49 to 57 (GMPGIGKTT), Asn145, and Arg203 contribute to the ATP site.

This sequence belongs to the activator 1 small subunits family. As to quaternary structure, replication factor C (RFC) is a heteropentamer of subunits RFC1, RFC2, RFC3, RFC4 and RFC5 and forms a complex with POL30/PCNA in the presence of ATP. Component of the RAD24-RFC complex which consists of RAD14, RFC2, RFC3, RFC4 and RFC5 and associates with the checkpoint clamp DDC1:MEC3:RAD17 complex. Component of the ELG1-RFC complex which consists of ELG1, RFC2, RFC3, RFC4 and RFC5. Component of the CTF18-RFC complex, which consists of CTF18, CTF8, DCC1, RFC2, RFC3, RFC4 and RFC5. RFC4 interacts with ECO1.

It localises to the nucleus. Functionally, component of ATP-dependent clamp loader (RFC and RFC-like) complexes for DNA clamps, such as the POL30/PCNA homotrimer and the checkpoint clamp DDC1:MEC3:RAD17 complex. During a clamp loading circle, the RFC:clamp complex binds to DNA and the recognition of the double-stranded/single-stranded junction stimulates ATP hydrolysis by RFC. The complex presumably provides bipartite ATP sites in which one subunit supplies a catalytic site for hydrolysis of ATP bound to the neighboring subunit. Dissociation of RFC from the clamp leaves the clamp encircling DNA. Component of the replication factor C (RFC or activator 1) complex which loads POL30/PCNA and acts during elongation of primed DNA templates by DNA polymerase delta and epsilon. RFC has an essential but redundant activity in sister chromatid cohesion establishment. Component of the RFC-like complex CTF18-RFC which is required for efficient establishment of chromosome cohesion during S-phase and may load or unload POL30/PCNA. Component of the RFC-like RAD24-RFC complex which loads the checkpoint clamp DDC1:MEC3:RAD17 complex and is involved in DNA repair pathways. Component of the RFC-like ELG1-RFC complex which appears to have a role in DNA replication, replication fork re-start, recombination and repair. This Saccharomyces cerevisiae (strain ATCC 204508 / S288c) (Baker's yeast) protein is Replication factor C subunit 4 (RFC4).